A 236-amino-acid polypeptide reads, in one-letter code: NAP1-binding protein 2 (236 aa).

Position 102 is a phosphoserine (serine 102). In terms of domain architecture, SH3 spans 110–171 (IVNQRAVALY…PEEFVSYIQP (62 aa)). 2 positions are modified to phosphoserine: serine 196 and serine 235.

Interacts with PBS2 and PTC1.

The protein localises to the cytoplasm. Its function is as follows. Negatively regulates the high-osmolarity glycerol (HOG) pathway through its negative regulation of the HOG1 kinase activity. Mediates the binding between the PTC1 phosphatase and the PBS2 MAP/ERK kinase (MEK). With PTC1, regulates endoplasmic reticulum inheritance through the cell wall integrity (CWI) MAPK pathway by modulating the MAPK, SLT2. The sequence is that of NAP1-binding protein 2 (NBP2) from Saccharomyces cerevisiae (strain ATCC 204508 / S288c) (Baker's yeast).